The chain runs to 175 residues: FMN reductase (NADH) RutF (175 aa).

It belongs to the non-flavoprotein flavin reductase family. RutF subfamily.

It catalyses the reaction FMNH2 + NAD(+) = FMN + NADH + 2 H(+). In terms of biological role, catalyzes the reduction of FMN to FMNH2 which is used to reduce pyrimidine by RutA via the Rut pathway. This is FMN reductase (NADH) RutF from Serratia proteamaculans (strain 568).